The following is a 403-amino-acid chain: 26S proteasome regulatory subunit 8 (403 aa).

Gly186–Thr193 is a binding site for ATP.

The protein belongs to the AAA ATPase family.

It is found in the cytoplasm. The protein localises to the nucleus. The 26S proteasome is involved in the ATP-dependent degradation of ubiquitinated proteins. The regulatory (or ATPase) complex confers ATP dependency and substrate specificity to the 26S complex. The protein is 26S proteasome regulatory subunit 8 (psmC5) of Dictyostelium discoideum (Social amoeba).